The chain runs to 125 residues: uncharacterized protein (125 aa).

This sequence belongs to the asfivirus B125R family.

This is an uncharacterized protein from Ornithodoros (relapsing fever ticks).